The chain runs to 414 residues: Esterase FrsA (414 aa).

Belongs to the FrsA family.

It catalyses the reaction a carboxylic ester + H2O = an alcohol + a carboxylate + H(+). Its function is as follows. Catalyzes the hydrolysis of esters. This Escherichia coli O139:H28 (strain E24377A / ETEC) protein is Esterase FrsA.